The following is a 422-amino-acid chain: Phytoene synthase 1, chloroplastic (422 aa).

A chloroplast-targeting transit peptide spans 1 to 70; it reads MSSSVAVLWV…NRSRRIGVVS (70 aa).

This sequence belongs to the phytoene/squalene synthase family. Monomer. Interacts with OR. Interacts with ORLIKE.

Its subcellular location is the plastid. It localises to the chloroplast membrane. The catalysed reaction is 2 (2E,6E,10E)-geranylgeranyl diphosphate = 15-cis-phytoene + 2 diphosphate. It participates in carotenoid biosynthesis; phytoene biosynthesis; all-trans-phytoene from geranylgeranyl diphosphate: step 1/1. Catalyzes the reaction from prephytoene diphosphate to phytoene. This chain is Phytoene synthase 1, chloroplastic, found in Arabidopsis thaliana (Mouse-ear cress).